A 499-amino-acid chain; its full sequence is Ubiquitin carboxyl-terminal hydrolase 16 (499 aa).

A USP domain is found at 53–497 (VGLINRGNDC…YAYMLYYERV (445 aa)). The active-site Nucleophile is cysteine 62. Histidine 407 functions as the Proton acceptor in the catalytic mechanism.

The protein belongs to the peptidase C19 family.

It catalyses the reaction Thiol-dependent hydrolysis of ester, thioester, amide, peptide and isopeptide bonds formed by the C-terminal Gly of ubiquitin (a 76-residue protein attached to proteins as an intracellular targeting signal).. In Saccharomyces cerevisiae (strain ATCC 204508 / S288c) (Baker's yeast), this protein is Ubiquitin carboxyl-terminal hydrolase 16 (UBP16).